Consider the following 117-residue polypeptide: Iron-sulfur cluster insertion protein ErpA (117 aa).

The iron-sulfur cluster site is built by Cys-45, Cys-109, and Cys-111.

It belongs to the HesB/IscA family. In terms of assembly, homodimer. Iron-sulfur cluster serves as cofactor.

In terms of biological role, required for insertion of 4Fe-4S clusters for at least IspG. This chain is Iron-sulfur cluster insertion protein ErpA, found in Saccharophagus degradans (strain 2-40 / ATCC 43961 / DSM 17024).